The primary structure comprises 305 residues: MQQTASVNMQDFGYVEQFLDAMWMERGLAENTLASYRNDLMKLLQWMEANHYRLDFISLSGLQQYQSYLVDQDYKQTSRARMLSAIRRLFQYLHREKVRADDPSALLVSPKLPQRLPKDISEEQVDALLDAPDPNDPVELRDKAMLELLYATGLRVTELVSLTMENISLRQGVVRVTGKGGKERLVPMGENAIDWIETFIKQGRPALLGETSSDVVFPSKRARQMTRQTFWHRIKFYAVIAGIDTDHLSPHVLRHAFATHLLNYGADLRVVQMLLGHSDLSTTQIYTHVATERLKQIHSQHHPRA.

Residues 9-94 form the Core-binding (CB) domain; sequence MQDFGYVEQF…AIRRLFQYLH (86 aa). The Tyr recombinase domain maps to 115–299; sequence RLPKDISEEQ…ATERLKQIHS (185 aa). Catalysis depends on residues arginine 155, lysine 179, histidine 251, arginine 254, and histidine 277. Tyrosine 286 (O-(3'-phospho-DNA)-tyrosine intermediate) is an active-site residue.

This sequence belongs to the 'phage' integrase family. XerD subfamily. Forms a cyclic heterotetrameric complex composed of two molecules of XerC and two molecules of XerD.

Its subcellular location is the cytoplasm. In terms of biological role, site-specific tyrosine recombinase, which acts by catalyzing the cutting and rejoining of the recombining DNA molecules. The XerC-XerD complex is essential to convert dimers of the bacterial chromosome into monomers to permit their segregation at cell division. It also contributes to the segregational stability of plasmids. The protein is Tyrosine recombinase XerD of Vibrio vulnificus (strain CMCP6).